Here is a 1819-residue protein sequence, read N- to C-terminus: Gamma-tubulin complex component 6 (1819 aa).

Disordered stretches follow at residues S810–P889, L929–Y951, and R1000–E1023. Repeat copies occupy residues G1027 to H1053, G1054 to H1080, G1081 to H1107, G1108 to H1134, G1135 to H1161, G1162 to H1188, G1189 to H1215, G1216 to H1242, and G1243 to H1269. The tract at residues G1027–H1269 is 9 X 27 AA tandem repeats. Positions P1271–Q1412 are disordered. The span at P1297–V1314 shows a compositional bias: polar residues. The segment covering L1321–G1335 has biased composition (low complexity). Residues W1384–P1398 are compositionally biased toward polar residues.

Belongs to the TUBGCP family. In terms of assembly, component of the gamma-tubulin ring complex (gTuRC) consisting of TUBGCP2, TUBGCP3, TUBGCP4, TUBGCP5 and TUBGCP6 and gamma-tubulin TUBG1 or TUBG2. TUBGCP2, TUBGCP3, TUBGCP4, TUBGCP5 and TUBGCP6 assemble in a 5:5:2:1:1 stoichiometry; each is associated with a gamma-tubulin, thereby arranging 14 gamma-tubulins in a helical manner. Gamma-tubulin at the first position is blocked by TUBGCP3 at the last position, allowing 13 protafilaments to grow into a microtubule. The gTuRC (via TUBGCP3 and TUBGCP6) interacts with ACTB and MZT1; the interactions form a luminal bridge that stabilizes the initial structure during complex assembly. The gTuRC (via TUBGCP2) interacts with MZT2A/MZT2B and CDK5RAP2 (via CM1 motif); the interactions play a role in gTuRC activation.

The protein resides in the cytoplasm. It localises to the cytoskeleton. It is found in the microtubule organizing center. The protein localises to the centrosome. Functionally, component of the gamma-tubulin ring complex (gTuRC) which mediates microtubule nucleation. The gTuRC regulates the minus-end nucleation of alpha-beta tubulin heterodimers that grow into microtubule protafilaments, a critical step in centrosome duplication and spindle formation. The protein is Gamma-tubulin complex component 6 (TUBGCP6) of Homo sapiens (Human).